The chain runs to 87 residues: Cell division topological specificity factor (87 aa).

This sequence belongs to the MinE family.

In terms of biological role, prevents the cell division inhibition by proteins MinC and MinD at internal division sites while permitting inhibition at polar sites. This ensures cell division at the proper site by restricting the formation of a division septum at the midpoint of the long axis of the cell. The sequence is that of Cell division topological specificity factor from Roseiflexus castenholzii (strain DSM 13941 / HLO8).